Consider the following 122-residue polypeptide: Large ribosomal subunit protein bL12 (122 aa).

The protein belongs to the bacterial ribosomal protein bL12 family. In terms of assembly, homodimer. Part of the ribosomal stalk of the 50S ribosomal subunit. Forms a multimeric L10(L12)X complex, where L10 forms an elongated spine to which 2 to 4 L12 dimers bind in a sequential fashion. Binds GTP-bound translation factors.

Its function is as follows. Forms part of the ribosomal stalk which helps the ribosome interact with GTP-bound translation factors. Is thus essential for accurate translation. This is Large ribosomal subunit protein bL12 from Staphylococcus aureus (strain Newman).